The chain runs to 585 residues: Frizzled-5 (585 aa).

The first 26 residues, 1–26 (MARPDPSAPPSLLLLLLAQLVGRAAA), serve as a signal peptide directing secretion. At 27-238 (ASKAPVCQEI…ADERTFATFW (212 aa)) the chain is on the extracellular side. Residues 28–150 (SKAPVCQEIT…RDAEVLCMDY (123 aa)) form the FZ domain. 5 cysteine pairs are disulfide-bonded: C33–C94, C41–C87, C78–C116, C105–C147, and C109–C133. N47 carries an N-linked (GlcNAc...) asparagine glycan. N-linked (GlcNAc...) asparagine glycosylation is present at N151. The tract at residues 156-179 (TTAPPRPFPAKPTLPGPPGAPASG) is disordered. The span at 159-175 (PPRPFPAKPTLPGPPGA) shows a compositional bias: pro residues. A helical membrane pass occupies residues 239-259 (IGLWSVLCFISTSTTVATFLI). At 260–270 (DMERFRYPERP) the chain is on the cytoplasmic side. Residues 271 to 291 (IIFLSACYLCVSLGFLVRLVV) form a helical membrane-spanning segment. Topologically, residues 292–315 (GHASVACSREHNHIHYETTGPALC) are extracellular. Residues 316 to 336 (TIVFLLVYFFGMASSIWWVIL) form a helical membrane-spanning segment. Residues 337-358 (SLTWFLAAGMKWGNEAIAGYAQ) are Cytoplasmic-facing. The chain crosses the membrane as a helical span at residues 359–379 (YFHLAAWLIPSVKSITALALS). The Extracellular portion of the chain corresponds to 380–402 (SVDGDPVAGICYVGNQNLNSLRG). The chain crosses the membrane as a helical span at residues 403–423 (FVLGPLVLYLLVGTLFLLAGF). Residues 424–449 (VSLFRIRSVIKQGGTKTDKLEKLMIR) lie on the Cytoplasmic side of the membrane. A helical transmembrane segment spans residues 450-470 (IGIFTLLYTVPASIVVACYLY). Topologically, residues 471–500 (EQHYRESWEAALTCACPGHDTGQPRAKPEY) are extracellular. Residues 501–521 (WVLMLKYFMCLVVGITSGVWI) form a helical membrane-spanning segment. The Cytoplasmic portion of the chain corresponds to 522–585 (WSGKTVESWR…YHKQVSLSHV (64 aa)). Positions 525–530 (KTVESW) match the Lys-Thr-X-X-X-Trp motif, mediates interaction with the PDZ domain of Dvl family members motif. The PDZ-binding signature appears at 583–585 (SHV).

The protein belongs to the G-protein coupled receptor Fz/Smo family. In terms of assembly, binding of unsaturated fatty acid molecules (via FZ domain) promotes homodimerization. Interacts with WNT2B. Interacts with WNT3A. Interacts with WNT7A. Interacts with GOPC. Ubiquitinated by RNF43 and ZNRF3, leading to its degradation by the proteasome.

It is found in the cell membrane. The protein localises to the golgi apparatus membrane. The protein resides in the synapse. Its subcellular location is the perikaryon. It localises to the cell projection. It is found in the dendrite. The protein localises to the axon. Its function is as follows. Receptor for Wnt proteins. Functions in the canonical Wnt/beta-catenin signaling pathway. In vitro activates WNT2, WNT10B, WNT5A, but not WNT2B or WNT4 signaling. In neurons, activation by WNT7A promotes formation of synapses. May be involved in transduction and intercellular transmission of polarity information during tissue morphogenesis and/or in differentiated tissues. Plays a role in yolk sac angiogenesis and in placental vascularization. Plays a role in ocular development. The polypeptide is Frizzled-5 (FZD5) (Homo sapiens (Human)).